Here is a 447-residue protein sequence, read N- to C-terminus: Putative branched-chain amino acid carrier protein SSP1343 (447 aa).

12 consecutive transmembrane segments (helical) span residues 6–26, 40–60, 74–94, 116–136, 143–163, 192–212, 228–248, 289–309, 324–344, 349–369, 381–401, and 416–436; these read WIIG…IFPP, ILAF…VGAL, PKFS…LFAI, LALF…CINP, IGSL…VKGF, GYLT…VNAV, LMAG…LGYI, LLGI…VVAV, IYVI…LNSV, VPVL…ILLA, IPVA…QGWI, and LEWF…AAMV.

It belongs to the branched chain amino acid transporter family.

It is found in the cell membrane. Component of the transport system for branched-chain amino acids (leucine, isoleucine and valine), which is coupled to a proton motive force. The polypeptide is Putative branched-chain amino acid carrier protein SSP1343 (Staphylococcus saprophyticus subsp. saprophyticus (strain ATCC 15305 / DSM 20229 / NCIMB 8711 / NCTC 7292 / S-41)).